The primary structure comprises 440 residues: Adenylosuccinate synthetase (440 aa).

GTP is bound by residues G12–K18 and G40–T42. The Proton acceptor role is filled by D13. The Mg(2+) site is built by D13 and G40. IMP is bound by residues D13–K16, N38–H41, T128, R142, Q223, T238, and R302. H41 (proton donor) is an active-site residue. Position 298-304 (T298–R304) interacts with substrate. Residues R304, K330–D332, and S412–G414 each bind GTP.

This sequence belongs to the adenylosuccinate synthetase family. As to quaternary structure, homodimer. It depends on Mg(2+) as a cofactor.

It localises to the cytoplasm. The enzyme catalyses IMP + L-aspartate + GTP = N(6)-(1,2-dicarboxyethyl)-AMP + GDP + phosphate + 2 H(+). Its pathway is purine metabolism; AMP biosynthesis via de novo pathway; AMP from IMP: step 1/2. In terms of biological role, plays an important role in the de novo pathway of purine nucleotide biosynthesis. Catalyzes the first committed step in the biosynthesis of AMP from IMP. The sequence is that of Adenylosuccinate synthetase from Gloeobacter violaceus (strain ATCC 29082 / PCC 7421).